The sequence spans 78 residues: UPF0349 protein RBAM_029300 (78 aa).

The protein belongs to the UPF0349 family.

This is UPF0349 protein RBAM_029300 from Bacillus velezensis (strain DSM 23117 / BGSC 10A6 / LMG 26770 / FZB42) (Bacillus amyloliquefaciens subsp. plantarum).